Consider the following 468-residue polypeptide: Transmembrane protein 151A (468 aa).

A disordered region spans residues 1–20 (MPEGEGGDCGEVPALVPDGE). 2 consecutive transmembrane segments (helical) span residues 45 to 65 (CLLL…CRLA) and 98 to 118 (YLYI…AECW). The interval 384–438 (VSSNSLPPARPSGPRLPFSRSRLSLGAGGRTTPGVFRSLSGGPLGRRGEDTEPLE) is disordered.

Belongs to the TMEM151 family. As to expression, highly expressed in the central nervous system (CNS) including the cerebral cortex, hippocampus, spinal cord, brainstem, and thalamus. Expression is relatively low during postnatal stages but highly expressed at postnatal day 14 (P14), and declined in adulthood. Also expressed in the stomach, heart, liver, spleen, lung, kidney, and muscle.

The protein resides in the endoplasmic reticulum membrane. The protein localises to the cell projection. It is found in the axon. Its subcellular location is the dendrite. This Mus musculus (Mouse) protein is Transmembrane protein 151A (Tmem151a).